The primary structure comprises 245 residues: Type II restriction enzyme EcoRV (245 aa).

Positions 45, 74, and 90 each coordinate Mg(2+). Catalysis depends on residues Asp74, Asp90, and Lys92.

As to quaternary structure, homodimer. Mg(2+) is required as a cofactor.

The catalysed reaction is Endonucleolytic cleavage of DNA to give specific double-stranded fragments with terminal 5'-phosphates.. In terms of biological role, a P subtype restriction enzyme that recognizes the double-stranded sequence 5'-GATATC-3' and cleaves after T-3. The polypeptide is Type II restriction enzyme EcoRV (ecoRVR) (Escherichia coli).